The following is a 63-amino-acid chain: Putative antitoxin AF_1084 (63 aa).

The protein belongs to the UPF0165 family.

Functionally, possibly the antitoxin component of a type II toxin-antitoxin (TA) system. The chain is Putative antitoxin AF_1084 from Archaeoglobus fulgidus (strain ATCC 49558 / DSM 4304 / JCM 9628 / NBRC 100126 / VC-16).